Consider the following 107-residue polypeptide: UPF0145 protein ETA_21660 (107 aa).

Belongs to the UPF0145 family.

The polypeptide is UPF0145 protein ETA_21660 (Erwinia tasmaniensis (strain DSM 17950 / CFBP 7177 / CIP 109463 / NCPPB 4357 / Et1/99)).